Reading from the N-terminus, the 151-residue chain is Large ribosomal subunit protein uL13 (151 aa).

The protein belongs to the universal ribosomal protein uL13 family. As to quaternary structure, part of the 50S ribosomal subunit.

In terms of biological role, this protein is one of the early assembly proteins of the 50S ribosomal subunit, although it is not seen to bind rRNA by itself. It is important during the early stages of 50S assembly. This Synechocystis sp. (strain ATCC 27184 / PCC 6803 / Kazusa) protein is Large ribosomal subunit protein uL13.